The sequence spans 375 residues: Glutamate 5-kinase (375 aa).

Residue Lys13 participates in ATP binding. Positions 54, 141, and 153 each coordinate substrate. ATP is bound by residues 173-174 (TD) and 216-222 (TGGMATK). Residues 281–359 (TGKIFIDAGA…EAIAAVLGYV (79 aa)) enclose the PUA domain.

The protein belongs to the glutamate 5-kinase family.

The protein localises to the cytoplasm. The enzyme catalyses L-glutamate + ATP = L-glutamyl 5-phosphate + ADP. It functions in the pathway amino-acid biosynthesis; L-proline biosynthesis; L-glutamate 5-semialdehyde from L-glutamate: step 1/2. In terms of biological role, catalyzes the transfer of a phosphate group to glutamate to form L-glutamate 5-phosphate. This is Glutamate 5-kinase from Synechocystis sp. (strain ATCC 27184 / PCC 6803 / Kazusa).